Consider the following 176-residue polypeptide: Nucleoside triphosphate/diphosphate phosphatase (176 aa).

Arginine 23 acts as the Proton donor in catalysis. The Mg(2+) site is built by asparagine 87, aspartate 103, aspartate 105, aspartate 107, aspartate 120, and glutamate 123.

Belongs to the Ntdp family. The cofactor is Mg(2+).

The catalysed reaction is a ribonucleoside 5'-triphosphate + H2O = a ribonucleoside 5'-diphosphate + phosphate + H(+). It carries out the reaction a ribonucleoside 5'-diphosphate + H2O = a ribonucleoside 5'-phosphate + phosphate + H(+). Functionally, has nucleoside phosphatase activity towards nucleoside triphosphates and nucleoside diphosphates. This is Nucleoside triphosphate/diphosphate phosphatase from Bacillus velezensis (strain DSM 23117 / BGSC 10A6 / LMG 26770 / FZB42) (Bacillus amyloliquefaciens subsp. plantarum).